The following is a 492-amino-acid chain: Protein nucleotidyltransferase YdiU (492 aa).

The ATP site is built by glycine 94, glycine 96, arginine 97, lysine 117, aspartate 129, glycine 130, arginine 180, and arginine 187. Aspartate 257 acts as the Proton acceptor in catalysis. Mg(2+) contacts are provided by asparagine 258 and aspartate 267. Aspartate 267 is a binding site for ATP.

Belongs to the SELO family. The cofactor is Mg(2+). Mn(2+) is required as a cofactor.

It catalyses the reaction L-seryl-[protein] + ATP = 3-O-(5'-adenylyl)-L-seryl-[protein] + diphosphate. The catalysed reaction is L-threonyl-[protein] + ATP = 3-O-(5'-adenylyl)-L-threonyl-[protein] + diphosphate. The enzyme catalyses L-tyrosyl-[protein] + ATP = O-(5'-adenylyl)-L-tyrosyl-[protein] + diphosphate. It carries out the reaction L-histidyl-[protein] + UTP = N(tele)-(5'-uridylyl)-L-histidyl-[protein] + diphosphate. It catalyses the reaction L-seryl-[protein] + UTP = O-(5'-uridylyl)-L-seryl-[protein] + diphosphate. The catalysed reaction is L-tyrosyl-[protein] + UTP = O-(5'-uridylyl)-L-tyrosyl-[protein] + diphosphate. Its function is as follows. Nucleotidyltransferase involved in the post-translational modification of proteins. It can catalyze the addition of adenosine monophosphate (AMP) or uridine monophosphate (UMP) to a protein, resulting in modifications known as AMPylation and UMPylation. The chain is Protein nucleotidyltransferase YdiU from Halalkalibacterium halodurans (strain ATCC BAA-125 / DSM 18197 / FERM 7344 / JCM 9153 / C-125) (Bacillus halodurans).